A 226-amino-acid polypeptide reads, in one-letter code: Nucleoside triphosphate pyrophosphatase (226 aa).

The active-site Proton acceptor is the Asp79. Residues 204-226 (WSRGTSTHPTPGTSATPKPNPGA) form a disordered region. Residues 206–220 (RGTSTHPTPGTSATP) are compositionally biased toward polar residues.

The protein belongs to the Maf family. The cofactor is a divalent metal cation.

The protein resides in the cytoplasm. It carries out the reaction a ribonucleoside 5'-triphosphate + H2O = a ribonucleoside 5'-phosphate + diphosphate + H(+). It catalyses the reaction a 2'-deoxyribonucleoside 5'-triphosphate + H2O = a 2'-deoxyribonucleoside 5'-phosphate + diphosphate + H(+). In terms of biological role, nucleoside triphosphate pyrophosphatase. May have a dual role in cell division arrest and in preventing the incorporation of modified nucleotides into cellular nucleic acids. This is Nucleoside triphosphate pyrophosphatase from Salinispora tropica (strain ATCC BAA-916 / DSM 44818 / JCM 13857 / NBRC 105044 / CNB-440).